A 147-amino-acid polypeptide reads, in one-letter code: Angiogenin (147 aa).

An N-terminal signal peptide occupies residues 1-24 (MVILLGPLLLVFMLGLGLAPLSLA). Catalysis depends on H37, which acts as the Proton acceptor. Residues R45 and D46 each coordinate tRNA. Intrachain disulfides connect C50/C104, C63/C115, and C81/C130. A Nucleolar localization signal motif is present at residues 55-59 (KQRGL). TRNA is bound by residues C104 and I126. H137 serves as the catalytic Proton donor.

Belongs to the pancreatic ribonuclease family. As to quaternary structure, homodimer. Interacts with RNH1; inhibiting ANG ribonuclease activity. Interacts with PCNA.

It is found in the secreted. Its subcellular location is the nucleus. The protein localises to the nucleolus. It localises to the cytoplasm. The protein resides in the stress granule. With respect to regulation, has weak tRNA ribonuclease activity by itself due to partial autoinhibition by its C-terminus, which folds into a short alpha-helix that partially occludes the substrate-binding site. In absence of stress, the ribonuclease activity is inhibited by RNH1 in the cytoplasm. In response to stress, dissociates from RNH1 in the cytoplasm and associates with cytoplasmic ribosomes with vacant A-sites: ribosomes directly activate the tRNA ribonuclease activity of ANG by refolding the C-terminal alpha-helix. In response to stress, the angiogenic activity of ANG is inhibited by RNH1 in the nucleus. In terms of biological role, secreted ribonuclease that can either promote or restrict cell proliferation of target cells, depending on the context. Endocytosed in target cells via its receptor PLXNB2 and translocates to the cytoplasm or nucleus. Under stress conditions, localizes to the cytoplasm and promotes the assembly of stress granules (SGs): specifically cleaves a subset of tRNAs within anticodon loops to produce tRNA-derived stress-induced fragments (tiRNAs), resulting in translation repression and inhibition of cell proliferation. tiRNas also prevent formation of apoptosome, thereby promoting cell survival. Preferentially cleaves RNAs between a pyrimidine and an adenosine residue, suggesting that it cleaves the anticodon loop of tRNA(Ala) (32-UUAGCAU-38) after positions 33 and 36. Cleaves a subset of tRNAs, including tRNA(Ala), tRNA(Glu), tRNA(Gly), tRNA(Lys), tRNA(Val), tRNA(His), tRNA(Asp) and tRNA(Sec). Under growth conditions and in differentiated cells, translocates to the nucleus and stimulates ribosomal RNA (rRNA) transcription, including that containing the initiation site sequences of 45S rRNA, thereby promoting cell growth and proliferation. Angiogenin induces vascularization of normal and malignant tissues via its ability to promote rRNA transcription. Involved in hematopoietic stem and progenitor cell (HSPC) growth and survival by promoting rRNA transcription in growth conditions and inhibiting translation in response to stress, respectively. Mediates the crosstalk between myeloid and intestinal epithelial cells to protect the intestinal epithelial barrier integrity: secreted by myeloid cells and promotes intestinal epithelial cells proliferation and survival. Also mediates osteoclast-endothelial cell crosstalk in growing bone: produced by osteoclasts and protects the neighboring vascular cells against senescence by promoting rRNA transcription. The sequence is that of Angiogenin (ANG) from Sus scrofa (Pig).